A 323-amino-acid chain; its full sequence is Viral cathepsin (323 aa).

Residues 1-16 (MNKILFYLFVYGVVNS) form the signal peptide. A propeptide spans 17 to 112 (AAYDLLKAPN…IVLDQPPGKG (96 aa)) (activation peptide). 3 disulfide bridges follow: cysteine 133-cysteine 174, cysteine 167-cysteine 207, and cysteine 262-cysteine 310. Cysteine 136 is an active-site residue. The N-linked (GlcNAc...) asparagine; by host glycan is linked to asparagine 158. Active-site residues include histidine 269 and asparagine 289.

Belongs to the peptidase C1 family. As to quaternary structure, interacts with chitinase/CHIA; this interaction maintains VCATH in the host endoplasmic reticulum. In terms of processing, synthesized as an inactive proenzyme and activated by proteolytic removal of the inhibitory propeptide.

Its subcellular location is the host endoplasmic reticulum. It carries out the reaction Endopeptidase of broad specificity, hydrolyzing substrates of both cathepsin L and cathepsin B.. In terms of biological role, cysteine protease that plays an essential role in host liquefaction to facilitate horizontal transmission of the virus. Accumulates within infected cells as an inactive proenzyme (proV-CATH), which is activated by proteolytic cleavage upon cell death. This chain is Viral cathepsin (VCATH), found in Lepidoptera (butterflies and moths).